The chain runs to 136 residues: Nucleoside diphosphate kinase (136 aa).

6 residues coordinate ATP: lysine 10, phenylalanine 58, arginine 86, threonine 92, arginine 104, and asparagine 114. Histidine 117 serves as the catalytic Pros-phosphohistidine intermediate.

The protein belongs to the NDK family. Homotetramer. The cofactor is Mg(2+).

The protein localises to the cytoplasm. The enzyme catalyses a 2'-deoxyribonucleoside 5'-diphosphate + ATP = a 2'-deoxyribonucleoside 5'-triphosphate + ADP. It catalyses the reaction a ribonucleoside 5'-diphosphate + ATP = a ribonucleoside 5'-triphosphate + ADP. Major role in the synthesis of nucleoside triphosphates other than ATP. The ATP gamma phosphate is transferred to the NDP beta phosphate via a ping-pong mechanism, using a phosphorylated active-site intermediate. The polypeptide is Nucleoside diphosphate kinase (Mycobacterium leprae (strain TN)).